Here is a 276-residue protein sequence, read N- to C-terminus: 2,3,4,5-tetrahydropyridine-2,6-dicarboxylate N-succinyltransferase (276 aa).

The substrate site is built by Arg100 and Asp137.

Belongs to the transferase hexapeptide repeat family. As to quaternary structure, homotrimer.

The protein resides in the cytoplasm. It carries out the reaction (S)-2,3,4,5-tetrahydrodipicolinate + succinyl-CoA + H2O = (S)-2-succinylamino-6-oxoheptanedioate + CoA. The protein operates within amino-acid biosynthesis; L-lysine biosynthesis via DAP pathway; LL-2,6-diaminopimelate from (S)-tetrahydrodipicolinate (succinylase route): step 1/3. This Zymomonas mobilis subsp. mobilis (strain ATCC 31821 / ZM4 / CP4) protein is 2,3,4,5-tetrahydropyridine-2,6-dicarboxylate N-succinyltransferase.